The chain runs to 407 residues: Phosphopentomutase (407 aa).

Mn(2+) is bound by residues Asp-10, Asp-306, His-311, Asp-347, His-348, and His-359.

Belongs to the phosphopentomutase family. The cofactor is Mn(2+).

It localises to the cytoplasm. It carries out the reaction 2-deoxy-alpha-D-ribose 1-phosphate = 2-deoxy-D-ribose 5-phosphate. The catalysed reaction is alpha-D-ribose 1-phosphate = D-ribose 5-phosphate. It participates in carbohydrate degradation; 2-deoxy-D-ribose 1-phosphate degradation; D-glyceraldehyde 3-phosphate and acetaldehyde from 2-deoxy-alpha-D-ribose 1-phosphate: step 1/2. Isomerase that catalyzes the conversion of deoxy-ribose 1-phosphate (dRib-1-P) and ribose 1-phosphate (Rib-1-P) to deoxy-ribose 5-phosphate (dRib-5-P) and ribose 5-phosphate (Rib-5-P), respectively. The chain is Phosphopentomutase from Salmonella schwarzengrund (strain CVM19633).